A 233-amino-acid polypeptide reads, in one-letter code: Probable dihydroorotate dehydrogenase B (NAD(+)), electron transfer subunit (233 aa).

The region spanning Met1–Lys87 is the FAD-binding FR-type domain. 4 residues coordinate [2Fe-2S] cluster: Cys202, Cys207, Cys210, and Cys218.

It belongs to the PyrK family. In terms of assembly, heterotetramer of 2 PyrK and 2 PyrD type B subunits. The cofactor is [2Fe-2S] cluster. FAD is required as a cofactor.

It participates in pyrimidine metabolism; UMP biosynthesis via de novo pathway; orotate from (S)-dihydroorotate (NAD(+) route): step 1/1. Functionally, responsible for channeling the electrons from the oxidation of dihydroorotate from the FMN redox center in the PyrD type B subunit to the ultimate electron acceptor NAD(+). The polypeptide is Probable dihydroorotate dehydrogenase B (NAD(+)), electron transfer subunit (Thermococcus kodakarensis (strain ATCC BAA-918 / JCM 12380 / KOD1) (Pyrococcus kodakaraensis (strain KOD1))).